The sequence spans 217 residues: Ribosomal RNA small subunit methyltransferase G (217 aa).

Residues Gly79, Leu84, Asp102 to Thr104, Val130 to Glu131, and Arg144 contribute to the S-adenosyl-L-methionine site.

This sequence belongs to the methyltransferase superfamily. RNA methyltransferase RsmG family.

The protein resides in the cytoplasm. In terms of biological role, specifically methylates the N7 position of a guanine in 16S rRNA. In Chlorobaculum tepidum (strain ATCC 49652 / DSM 12025 / NBRC 103806 / TLS) (Chlorobium tepidum), this protein is Ribosomal RNA small subunit methyltransferase G.